Reading from the N-terminus, the 358-residue chain is Nicotinate-nucleotide--dimethylbenzimidazole phosphoribosyltransferase (358 aa).

The Proton acceptor role is filled by Glu-323.

This sequence belongs to the CobT family.

The enzyme catalyses 5,6-dimethylbenzimidazole + nicotinate beta-D-ribonucleotide = alpha-ribazole 5'-phosphate + nicotinate + H(+). It participates in nucleoside biosynthesis; alpha-ribazole biosynthesis; alpha-ribazole from 5,6-dimethylbenzimidazole: step 1/2. Catalyzes the synthesis of alpha-ribazole-5'-phosphate from nicotinate mononucleotide (NAMN) and 5,6-dimethylbenzimidazole (DMB). This chain is Nicotinate-nucleotide--dimethylbenzimidazole phosphoribosyltransferase, found in Oleidesulfovibrio alaskensis (strain ATCC BAA-1058 / DSM 17464 / G20) (Desulfovibrio alaskensis).